Here is a 111-residue protein sequence, read N- to C-terminus: DNA-binding protein AF_2068 (111 aa).

It belongs to the PDCD5 family.

The protein is DNA-binding protein AF_2068 of Archaeoglobus fulgidus (strain ATCC 49558 / DSM 4304 / JCM 9628 / NBRC 100126 / VC-16).